We begin with the raw amino-acid sequence, 380 residues long: Erythronate-4-phosphate dehydrogenase (380 aa).

2 residues coordinate substrate: serine 45 and threonine 66. Position 146 (aspartate 146) interacts with NAD(+). Residue arginine 207 is part of the active site. Aspartate 232 contacts NAD(+). Residue glutamate 237 is part of the active site. Histidine 254 serves as the catalytic Proton donor. Glycine 257 is an NAD(+) binding site. Position 258 (tyrosine 258) interacts with substrate.

The protein belongs to the D-isomer specific 2-hydroxyacid dehydrogenase family. PdxB subfamily. Homodimer.

The protein resides in the cytoplasm. The enzyme catalyses 4-phospho-D-erythronate + NAD(+) = (R)-3-hydroxy-2-oxo-4-phosphooxybutanoate + NADH + H(+). Its pathway is cofactor biosynthesis; pyridoxine 5'-phosphate biosynthesis; pyridoxine 5'-phosphate from D-erythrose 4-phosphate: step 2/5. In terms of biological role, catalyzes the oxidation of erythronate-4-phosphate to 3-hydroxy-2-oxo-4-phosphonooxybutanoate. This chain is Erythronate-4-phosphate dehydrogenase, found in Marinomonas sp. (strain MWYL1).